Reading from the N-terminus, the 530-residue chain is Asc-type amino acid transporter 1 (530 aa).

The interval 1-36 is disordered; that stretch reads MRRDSDMASHIQQPGGHGNPGPAPSPSPGPGPGPGA. The span at 21–33 shows a compositional bias: pro residues; that stretch reads GPAPSPSPGPGPG. A run of 10 helical transmembrane segments spans residues 46–66, 78–98, 119–139, 192–212, 274–294, 316–336, 368–388, 394–414, 430–450, and 454–474; these read IGLV…GIFI, VGLA…GSLC, IFGG…MYPT, IQVI…TVGF, AIFI…VAYF, LLGY…FGGI, CTPI…MLVG, INYV…GLLV, LLVP…SFIS, and VCGV…LGVF. A disordered region spans residues 508 to 530; the sequence is EEENGPMGQPSPLPITDKPLKTQ.

The protein belongs to the amino acid-polyamine-organocation (APC) superfamily. Disulfide-linked heterodimer with the amino acid transport protein SLC3A2/4F2hc.

Its subcellular location is the cell membrane. The catalysed reaction is L-alanine(in) + glycine(out) = L-alanine(out) + glycine(in). It carries out the reaction L-serine(out) + L-alanine(in) = L-serine(in) + L-alanine(out). It catalyses the reaction L-threonine(out) + L-alanine(in) = L-threonine(in) + L-alanine(out). The enzyme catalyses L-cysteine(out) + L-alanine(in) = L-cysteine(in) + L-alanine(out). The catalysed reaction is 2-aminoisobutanoate(out) + L-alanine(in) = 2-aminoisobutanoate(in) + L-alanine(out). It carries out the reaction D-serine(out) + L-alanine(in) = D-serine(in) + L-alanine(out). It catalyses the reaction D-alanine(out) + L-alanine(in) = D-alanine(in) + L-alanine(out). The enzyme catalyses L-valine(out) + L-alanine(in) = L-valine(in) + L-alanine(out). The catalysed reaction is L-methionine(out) + L-alanine(in) = L-methionine(in) + L-alanine(out). It carries out the reaction beta-alanine(out) + L-alanine(in) = beta-alanine(in) + L-alanine(out). It catalyses the reaction D-cysteine(out) + L-alanine(in) = D-cysteine(in) + L-alanine(out). The enzyme catalyses D-threonine(out) + L-alanine(in) = D-threonine(in) + L-alanine(out). The catalysed reaction is D-isoleucine(out) + D-serine(in) = D-isoleucine(in) + D-serine(out). It carries out the reaction D-serine(in) = D-serine(out). Its function is as follows. Associates with SLC3A2/4F2hc to form a functional heterodimeric complex that translocates small neutral L- and D-amino acids across the plasma membrane. Preferentially mediates exchange transport, but can also operate via facilitated diffusion. Acts as a major transporter for glycine, L- and D-serine in the central nervous system. At the spinal cord and brainstem regulates glycine metabolism and glycinergic inhibitory neurotransmission by providing for glycine de novo synthesis from L-serine and glycine recycling from astrocytes to glycinergic motor neurons. At Schaffer collateral-CA1 synapses mediates D-serine and glycine release that modulates post-synaptic activation of NMDA receptors and excitatory glutamatergic transmission. May regulate D-serine release from mesenchymal progenitors located in developing subcutaneous adipose tissue, favoring white adipocyte over thermogenic beige adipocyte lineage commitment. This is Asc-type amino acid transporter 1 (Slc7a10) from Rattus norvegicus (Rat).